A 145-amino-acid chain; its full sequence is LIM domain only protein 3 (145 aa).

2 consecutive LIM zinc-binding domains span residues 11–73 (KGCA…LFGV) and 75–137 (GNCA…GLMK).

The protein is LIM domain only protein 3 (LMO3) of Bos taurus (Bovine).